Reading from the N-terminus, the 369-residue chain is Cytokine receptor common subunit gamma (369 aa).

Positions 1–22 are cleaved as a signal peptide; the sequence is MLKLLLSPRSFLVLQLLLLRAG. The Extracellular portion of the chain corresponds to 23–263; that stretch reads WSSKVLMSSA…ENPSLFALEA (241 aa). Residues Cys-62 and Cys-72 are joined by a disulfide bond. Asn-71, Asn-75, Asn-84, and Asn-96 each carry an N-linked (GlcNAc...) asparagine glycan. Cys-102 and Cys-115 are joined by a disulfide. One can recognise a Fibronectin type-III domain in the interval 156–254; that stretch reads APENLTLSNL…VHWGSHTVEE (99 aa). 2 N-linked (GlcNAc...) asparagine glycosylation sites follow: Asn-159 and Asn-164. Positions 238 to 242 match the WSXWS motif motif; that stretch reads WSKWS. A helical transmembrane segment spans residues 264 to 284; the sequence is VLIPVGTMGLIITLIFVYCWL. Residues 285 to 369 are Cytoplasmic-facing; sequence ERMPPIPPIK…PPCYSLKPEA (85 aa). The Box 1 motif motif lies at 286–294; that stretch reads RMPPIPPIK.

It belongs to the type I cytokine receptor family. Type 5 subfamily. In terms of assembly, the gamma subunit is common to the IL2, IL4, IL7, IL15, IL21 and probably also the IL13 receptors. Interacts with SHB upon interleukin stimulation. Interacts with IL9.

The protein localises to the cell membrane. The protein resides in the cell surface. Its function is as follows. Common subunit for the receptors for a variety of interleukins. Probably in association with IL15RA, involved in the stimulation of neutrophil phagocytosis by IL15. This Mus musculus (Mouse) protein is Cytokine receptor common subunit gamma (Il2rg).